A 350-amino-acid chain; its full sequence is Deoxyribonuclease-2-alpha (350 aa).

The first 19 residues, 1–19 (MAAPSSLLLAALLWVPAEA), serve as a signal peptide directing secretion. Residues Cys-22 and Cys-162 are joined by a disulfide bond. N-linked (GlcNAc...) asparagine glycans are attached at residues Asn-89, Asn-215, Asn-269, and Asn-293. Disulfide bonds link Cys-270-Cys-350 and Cys-311-Cys-330. His-298 is a catalytic residue.

It belongs to the DNase II family. Ubiquitous.

It localises to the lysosome. It carries out the reaction Endonucleolytic cleavage to nucleoside 3'-phosphates and 3'-phosphooligonucleotide end-products.. Its function is as follows. Hydrolyzes DNA under acidic conditions with a preference for double-stranded DNA. Plays a major role in the clearance of nucleic acids generated through apoptosis, hence preventing autoinflammation. Necessary for proper fetal development and for definitive erythropoiesis in fetal liver and bone marrow, where it degrades nuclear DNA expelled from erythroid precursor cells. This chain is Deoxyribonuclease-2-alpha (Dnase2), found in Rattus norvegicus (Rat).